A 628-amino-acid chain; its full sequence is Exonuclease V, mitochondrial (628 aa).

The N-terminal 21 residues, 1-21 (MSRFWHFKKFYFTSCYSMQRM), are a transit peptide targeting the mitochondrion. The tract at residues 37–58 (TSEHEQVQSISKEESRSLSSND) is disordered. The segment covering 38–52 (SEHEQVQSISKEESR) has biased composition (basic and acidic residues). 4 residues coordinate [4Fe-4S] cluster: cysteine 164, cysteine 586, cysteine 589, and cysteine 595.

It belongs to the EXO5 family. As to quaternary structure, monomer. Requires Mg(2+) as cofactor. [4Fe-4S] cluster is required as a cofactor.

The protein resides in the mitochondrion. Functionally, single strand DNA specific 5' exonuclease involved in mitochondrial DNA replication and recombination. Releases dinucleotides as main products of catalysis. Has the capacity to slide across 5'double-stranded DNA or 5'RNA sequences and resumes cutting two nucleotides downstream of the double-stranded-to-single-stranded junction or RNA-to-DNA junction, respectively. This chain is Exonuclease V, mitochondrial (DEM1), found in Candida albicans (strain SC5314 / ATCC MYA-2876) (Yeast).